Reading from the N-terminus, the 81-residue chain is uncharacterized protein (81 aa).

Positions 11-34 (GSVSSSNKVSVANGSSSSSFGSNG) are disordered.

This is an uncharacterized protein from Dictyostelium discoideum (Social amoeba).